Here is a 314-residue protein sequence, read N- to C-terminus: Glycine--tRNA ligase alpha subunit (314 aa).

Belongs to the class-II aminoacyl-tRNA synthetase family. In terms of assembly, tetramer of two alpha and two beta subunits.

Its subcellular location is the cytoplasm. The catalysed reaction is tRNA(Gly) + glycine + ATP = glycyl-tRNA(Gly) + AMP + diphosphate. The polypeptide is Glycine--tRNA ligase alpha subunit (Leuconostoc citreum (strain KM20)).